Consider the following 750-residue polypeptide: Phosphoribosylformylglycinamidine synthase subunit PurL (750 aa).

Histidine 54 is an active-site residue. Tyrosine 57 and lysine 101 together coordinate ATP. Glutamate 103 serves as a coordination point for Mg(2+). Residues 104–107 and arginine 126 contribute to the substrate site; that span reads SHNH. Catalysis depends on histidine 105, which acts as the Proton acceptor. Residue aspartate 127 coordinates Mg(2+). Position 251 (glutamine 251) interacts with substrate. Residue aspartate 279 participates in Mg(2+) binding. 323–325 contributes to the substrate binding site; that stretch reads ESQ. Aspartate 509 and glycine 546 together coordinate ATP. Asparagine 547 contributes to the Mg(2+) binding site. Serine 549 contributes to the substrate binding site.

This sequence belongs to the FGAMS family. Monomer. Part of the FGAM synthase complex composed of 1 PurL, 1 PurQ and 2 PurS subunits.

It localises to the cytoplasm. The catalysed reaction is N(2)-formyl-N(1)-(5-phospho-beta-D-ribosyl)glycinamide + L-glutamine + ATP + H2O = 2-formamido-N(1)-(5-O-phospho-beta-D-ribosyl)acetamidine + L-glutamate + ADP + phosphate + H(+). Its pathway is purine metabolism; IMP biosynthesis via de novo pathway; 5-amino-1-(5-phospho-D-ribosyl)imidazole from N(2)-formyl-N(1)-(5-phospho-D-ribosyl)glycinamide: step 1/2. Its function is as follows. Part of the phosphoribosylformylglycinamidine synthase complex involved in the purines biosynthetic pathway. Catalyzes the ATP-dependent conversion of formylglycinamide ribonucleotide (FGAR) and glutamine to yield formylglycinamidine ribonucleotide (FGAM) and glutamate. The FGAM synthase complex is composed of three subunits. PurQ produces an ammonia molecule by converting glutamine to glutamate. PurL transfers the ammonia molecule to FGAR to form FGAM in an ATP-dependent manner. PurS interacts with PurQ and PurL and is thought to assist in the transfer of the ammonia molecule from PurQ to PurL. This chain is Phosphoribosylformylglycinamidine synthase subunit PurL, found in Cutibacterium acnes (strain DSM 16379 / KPA171202) (Propionibacterium acnes).